The sequence spans 371 residues: MKLNTLQLENYRNYEQVTLDCHPEVNILIGENAQGKTNLLESIYTLALAKSHRTSNDKELIRFKSDYAKIEGELSYRHGTMPLTMFITKKGKQVKVNHLEQSRLTQYIGHLNVVLFAPEDLNIVKGSPQIRRRFIDMELGQISAVYLNDLAQYQRILKQKNNYLKQLQIGQKTDTTMLEVLNQQFVEYALKVTLRREHFIKELETLAQPIHAGITNDQETLTLDYVPSLKLSNYEANQSELIEEVLALLNDNLQREKERGVCLYGPHRDDLSFNVNGMDAQTYGSQGQQRTTALSIKLAEIELMNIEVGEYPILLLDDVLSELDDSRQTHLLSTIQHKVQTFVTTTSVEGIDHEIMNNAKLYRISQGEILK.

Residue 30–37 (GENAQGKT) participates in ATP binding.

The protein belongs to the RecF family.

The protein localises to the cytoplasm. In terms of biological role, the RecF protein is involved in DNA metabolism; it is required for DNA replication and normal SOS inducibility. RecF binds preferentially to single-stranded, linear DNA. It also seems to bind ATP. The polypeptide is DNA replication and repair protein RecF (Staphylococcus epidermidis (strain ATCC 12228 / FDA PCI 1200)).